A 433-amino-acid chain; its full sequence is Steroid hormone receptor ERR2 (433 aa).

Residues 1 to 41 (MSSEDRHLGSSCGSFIKTEPSSPSSGIDALSHHSPSGSSDA) are disordered. Residues 32–41 (HHSPSGSSDA) are compositionally biased toward low complexity. An interaction with NANOG region spans residues 93 to 211 (YMLNAIPKRL…SPPAKKPLTK (119 aa)). The nuclear receptor DNA-binding region spans 100–186 (KRLCLVCGDI…RVRGGRQKYK (87 aa)). NR C4-type zinc fingers lie at residues 103-123 (CLVC…CEAC) and 139-163 (CPAT…FMKC). An essential for ESRRB transcriptional activity and interaction with NCOA3 region spans residues 203-433 (PPAKKPLTKI…LFLEMLEAKV (231 aa)). One can recognise an NR LBD domain in the interval 208-432 (PLTKIVSYLL…KLFLEMLEAK (225 aa)).

It belongs to the nuclear hormone receptor family. NR3 subfamily. In terms of assembly, binds DNA as a monomer. Interacts with NR0B1; represses ESRRB activity at the GATA6 promoter. Interacts with NANOG; reciprocally modulates their transcriptional activities and activates POU5F1 expression. Interacts with NCOA3; mediates the interaction between ESRRB and RNA polymerase II complexes and allows NCOA3 corecruitment to ESRRB, KLF4, NANOG, and SOX2 enhancer regions to trigger ESRRB-dependent gene activation involved in self-renewal and pluripotency. Interacts with KDM1A; co-occupes the core set of ESRRB targets including ELF5 and EOMES. Interacts with the multiprotein complex Integrator, at least composed of INTS1, INTS2, INTS3, INTS4, INTS5, INTS6, INTS7, INTS8, INTS9/RC74, INTS10, INTS11/CPSF3L and INTS12; ESRRB is probably not a core component of the integrator complex and associates to integrator via its interaction with INTS1 and INTS9; attracts the transcriptional machinery. Interacts with JARID2. Interacts with POU5F1; recruits ESRRB near the POU5F1-SOX2 element in the NANOG proximal promoter leading to activation of NANOG expression; the interaction is DNA independent. Post-translationally, acetylated by PCAF/KAT2 (in vitro).

It localises to the nucleus. The protein resides in the cytoplasm. The protein localises to the chromosome. Functionally, transcription factor that binds a canonical ESRRB recognition (ERRE) sequence 5'TCAAGGTCA-3' localized on promoter and enhancer of targets genes regulating their expression or their transcription activity. Plays a role, in a LIF independent manner, in maintainance of self-renewal and pluripotency of embryonic and trophoblast stem cells through different signaling pathways including FGF signaling pathway and Wnt signaling pathways. Involved in morula development (2-16 cells embryos) by acting as a regulator at the 8-cell stage. Upon FGF signaling pathway activation, interacts with KDM1A by directly binding to enhancer site of ELF5 and EOMES and activating their transcription leading to self-renewal of trophoblast stem cells. Also regulates expression of multiple rod-specific genes and is required for survival of this cell type. Plays a role as transcription factor activator of GATA6, NR0B1, POU5F1 and PERM1. Plays a role as transcription factor repressor of NFE2L2 transcriptional activity and ESR1 transcriptional activity. During mitosis remains bound to a subset of interphase target genes, including pluripotency regulators, through the canonical ESRRB recognition (ERRE) sequence, leading to their transcriptional activation in early G1 phase. Can coassemble on structured DNA elements with other transcription factors like SOX2, POU5F1, KDM1A and NCOA3 to trigger ESRRB-dependent gene activation. This mechanism, in the case of SOX2 corecruitment prevents the embryonic stem cells (ESCs) to epiblast stem cells (EpiSC) transition through positive regulation of NR0B1 that inhibits the EpiSC transcriptional program. Also plays a role inner ear development by controlling expression of ion channels and transporters and in early placentation. The chain is Steroid hormone receptor ERR2 from Rattus norvegicus (Rat).